We begin with the raw amino-acid sequence, 166 residues long: Lipoprotein signal peptidase (166 aa).

The next 4 membrane-spanning stretches (helical) occupy residues 9–29 (ASGA…FDQL), 45–65 (ALTS…FGFL), 71–91 (WQRW…CFLL), and 100–120 (FSLS…DRLV). Active-site residues include D126 and D144. Residues 135–155 (WHFPAFNLADSAITVGAVLLV) form a helical membrane-spanning segment.

The protein belongs to the peptidase A8 family.

It is found in the cell inner membrane. It catalyses the reaction Release of signal peptides from bacterial membrane prolipoproteins. Hydrolyzes -Xaa-Yaa-Zaa-|-(S,diacylglyceryl)Cys-, in which Xaa is hydrophobic (preferably Leu), and Yaa (Ala or Ser) and Zaa (Gly or Ala) have small, neutral side chains.. The protein operates within protein modification; lipoprotein biosynthesis (signal peptide cleavage). This protein specifically catalyzes the removal of signal peptides from prolipoproteins. This Burkholderia ambifaria (strain MC40-6) protein is Lipoprotein signal peptidase.